The primary structure comprises 272 residues: ATP synthase subunit a (272 aa).

6 helical membrane passes run 41–61 (VLNI…LSIF), 110–130 (FVWV…FPFI), 143–165 (VPSA…ILFY), 188–208 (VFFI…PISL), 222–242 (IFIL…NVPW), and 243–263 (AIFH…LTIV).

The protein belongs to the ATPase A chain family. F-type ATPases have 2 components, CF(1) - the catalytic core - and CF(0) - the membrane proton channel. CF(1) has five subunits: alpha(3), beta(3), gamma(1), delta(1), epsilon(1). CF(0) has three main subunits: a(1), b(2) and c(9-12). The alpha and beta chains form an alternating ring which encloses part of the gamma chain. CF(1) is attached to CF(0) by a central stalk formed by the gamma and epsilon chains, while a peripheral stalk is formed by the delta and b chains.

Its subcellular location is the cell membrane. Functionally, key component of the proton channel; it plays a direct role in the translocation of protons across the membrane. The chain is ATP synthase subunit a from Buchnera aphidicola subsp. Schizaphis graminum (strain Sg).